We begin with the raw amino-acid sequence, 388 residues long: Succinate--CoA ligase [ADP-forming] subunit beta (388 aa).

In terms of domain architecture, ATP-grasp spans Lys9 to Gln244. ATP-binding positions include Lys46, Gly53–Gly55, Glu99, Thr102, and Glu107. Mg(2+) is bound by residues Asn199 and Asp213. Substrate is bound by residues Asn264 and Gly321 to Val323.

Belongs to the succinate/malate CoA ligase beta subunit family. Heterotetramer of two alpha and two beta subunits. Requires Mg(2+) as cofactor.

It carries out the reaction succinate + ATP + CoA = succinyl-CoA + ADP + phosphate. The enzyme catalyses GTP + succinate + CoA = succinyl-CoA + GDP + phosphate. It participates in carbohydrate metabolism; tricarboxylic acid cycle; succinate from succinyl-CoA (ligase route): step 1/1. Succinyl-CoA synthetase functions in the citric acid cycle (TCA), coupling the hydrolysis of succinyl-CoA to the synthesis of either ATP or GTP and thus represents the only step of substrate-level phosphorylation in the TCA. The beta subunit provides nucleotide specificity of the enzyme and binds the substrate succinate, while the binding sites for coenzyme A and phosphate are found in the alpha subunit. The protein is Succinate--CoA ligase [ADP-forming] subunit beta of Enterobacter sp. (strain 638).